Reading from the N-terminus, the 324-residue chain is MPLFNSILDTIGRTPIVRLQRMAPEHTSVYVKVESFNPGGSVKDRLALSVVLDAEAKGLLKPGDTIVECTSGNVGIALAMVAAARGYRFVAVMGDTYSVERRKLIRAYGGKLVLFPGHLGSKGGNLIADELAEKYGWFRARQFDNPANPSYHRETTASEILADFAGKRLDHFVTGFGTTGTLTGVGQMLRVARPEVRVVALEPSNAAMLARGEWSPHQIQGLAPNFVPGVLDRSVIDDLVTMDEVTARDTSRRLAAEEGIFAGISAGATVATALSIAEHAPEGTVLLAMLPDTGERYLSTFLFDGVDEGSDDAWLASLDTGSGL.

Lys43 carries the post-translational modification N6-(pyridoxal phosphate)lysine. Pyridoxal 5'-phosphate is bound by residues Asn73, Gly177 to Thr181, and Ser265.

This sequence belongs to the cysteine synthase/cystathionine beta-synthase family. In terms of assembly, homotetramer. Requires pyridoxal 5'-phosphate as cofactor.

It carries out the reaction hydroxyurea + O-acetyl-L-serine = O-ureido-L-serine + acetate + H(+). The catalysed reaction is O-acetyl-L-serine + hydrogen sulfide = L-cysteine + acetate. In terms of biological role, involved in the biosynthesis of the antibiotic D-cycloserine (DCS), a cyclic structural analog of D-alanine, used as an antitubercular agent. Catalyzes the addition of hydroxyurea on O-acetyl-L-serine (OAS) to yield O-ureido-L-serine. It prefers sulfide as the second substrate, followed by hydroxyurea, L-homocysteine, and thiosulfate. The chain is O-ureido-L-serine synthase from Streptomyces lavendulae.